Reading from the N-terminus, the 154-residue chain is SsrA-binding protein (154 aa).

The tract at residues 134–154 (ETLRRRDAKREVERALKEKNR) is disordered.

The protein belongs to the SmpB family.

The protein resides in the cytoplasm. In terms of biological role, required for rescue of stalled ribosomes mediated by trans-translation. Binds to transfer-messenger RNA (tmRNA), required for stable association of tmRNA with ribosomes. tmRNA and SmpB together mimic tRNA shape, replacing the anticodon stem-loop with SmpB. tmRNA is encoded by the ssrA gene; the 2 termini fold to resemble tRNA(Ala) and it encodes a 'tag peptide', a short internal open reading frame. During trans-translation Ala-aminoacylated tmRNA acts like a tRNA, entering the A-site of stalled ribosomes, displacing the stalled mRNA. The ribosome then switches to translate the ORF on the tmRNA; the nascent peptide is terminated with the 'tag peptide' encoded by the tmRNA and targeted for degradation. The ribosome is freed to recommence translation, which seems to be the essential function of trans-translation. The protein is SsrA-binding protein of Halalkalibacterium halodurans (strain ATCC BAA-125 / DSM 18197 / FERM 7344 / JCM 9153 / C-125) (Bacillus halodurans).